We begin with the raw amino-acid sequence, 65 residues long: Large ribosomal subunit protein bL35 (65 aa).

It belongs to the bacterial ribosomal protein bL35 family.

In Clostridium acetobutylicum (strain ATCC 824 / DSM 792 / JCM 1419 / IAM 19013 / LMG 5710 / NBRC 13948 / NRRL B-527 / VKM B-1787 / 2291 / W), this protein is Large ribosomal subunit protein bL35.